A 77-amino-acid chain; its full sequence is Probable Vpr-like protein (77 aa).

Residues 34–42 (LIRLLQGLL) carry the Nuclear export signal motif. Positions 44–53 (RLRFRKPKSK) match the Nuclear localization signal motif.

The protein resides in the virion. It localises to the host nucleus. Functionally, seems to function as a Vpr-like protein, since it mediates host cell cycle arrest in G2 phase. Cell cycle arrest creates a favorable environment for maximizing viral expression and production. In Felidae (cat family), this protein is Probable Vpr-like protein.